Here is a 621-residue protein sequence, read N- to C-terminus: Ubiquitin carboxyl-terminal hydrolase MINDY-2 (621 aa).

Disordered regions lie at residues methionine 1–tyrosine 106 and valine 119–phenylalanine 179. The residue at position 94 (serine 94) is a Phosphoserine. The segment covering alanine 145 to aspartate 163 has biased composition (low complexity). The Nucleophile role is filled by cysteine 266. The active-site Proton acceptor is histidine 448. Positions glycine 507–glutamine 559 are ubiquitin-binding domain (UBD). Residues arginine 556 to leucine 621 form a disordered region. A compositionally biased stretch (low complexity) spans serine 558–glycine 591. Over residues serine 597 to leucine 621 the composition is skewed to basic and acidic residues.

This sequence belongs to the MINDY deubiquitinase family. FAM63 subfamily.

It catalyses the reaction Thiol-dependent hydrolysis of ester, thioester, amide, peptide and isopeptide bonds formed by the C-terminal Gly of ubiquitin (a 76-residue protein attached to proteins as an intracellular targeting signal).. Its function is as follows. Hydrolase that can remove 'Lys-48'-linked conjugated ubiquitin from proteins. Binds to polyubiquitin chains of different linkage types, including 'Lys-6', 'Lys-11', 'Lys-29', 'Lys-33', 'Lys-48' and 'Lys-63'. May play a regulatory role at the level of protein turnover. This is Ubiquitin carboxyl-terminal hydrolase MINDY-2 from Homo sapiens (Human).